The primary structure comprises 104 residues: Large ribosomal subunit protein bL21 (104 aa).

This sequence belongs to the bacterial ribosomal protein bL21 family. Part of the 50S ribosomal subunit. Contacts protein L20.

In terms of biological role, this protein binds to 23S rRNA in the presence of protein L20. The sequence is that of Large ribosomal subunit protein bL21 from Streptococcus sanguinis (strain SK36).